The chain runs to 184 residues: Large ribosomal subunit protein uL6 (184 aa).

Belongs to the universal ribosomal protein uL6 family. Part of the 50S ribosomal subunit.

This protein binds to the 23S rRNA, and is important in its secondary structure. It is located near the subunit interface in the base of the L7/L12 stalk, and near the tRNA binding site of the peptidyltransferase center. This chain is Large ribosomal subunit protein uL6, found in Thermococcus onnurineus (strain NA1).